A 199-amino-acid chain; its full sequence is Small ribosomal subunit protein uS4c (199 aa).

Positions 1-24 (MESDQSKVESDQSKMESDQSKVES) are enriched in basic and acidic residues. Positions 1–35 (MESDQSKVESDQSKMESDQSKVESDQSISQSTSKK) are disordered. The region spanning 84–146 (MRLDNIIFRL…QKSQELIKRN (63 aa)) is the S4 RNA-binding domain.

The protein belongs to the universal ribosomal protein uS4 family. In terms of assembly, part of the 30S ribosomal subunit. Contacts protein S5. The interaction surface between S4 and S5 is involved in control of translational fidelity.

The protein localises to the plastid. It localises to the chloroplast. In terms of biological role, one of the primary rRNA binding proteins, it binds directly to 16S rRNA where it nucleates assembly of the body of the 30S subunit. With S5 and S12 plays an important role in translational accuracy. The protein is Small ribosomal subunit protein uS4c (rps4) of Psilotum nudum (Whisk fern).